Consider the following 460-residue polypeptide: tRNA modification GTPase MnmE (460 aa).

Positions 24, 81, and 121 each coordinate (6S)-5-formyl-5,6,7,8-tetrahydrofolate. One can recognise a TrmE-type G domain in the interval 218–384 (GLVVAIAGPP…MVEALAGFAA (167 aa)). GTP contacts are provided by residues 228-233 (NVGKST), 247-253 (SPHAGTT), and 272-275 (DTAG). Mg(2+) contacts are provided by Ser-232 and Thr-253. Residue Lys-460 participates in (6S)-5-formyl-5,6,7,8-tetrahydrofolate binding.

This sequence belongs to the TRAFAC class TrmE-Era-EngA-EngB-Septin-like GTPase superfamily. TrmE GTPase family. As to quaternary structure, homodimer. Heterotetramer of two MnmE and two MnmG subunits. K(+) is required as a cofactor.

The protein localises to the cytoplasm. In terms of biological role, exhibits a very high intrinsic GTPase hydrolysis rate. Involved in the addition of a carboxymethylaminomethyl (cmnm) group at the wobble position (U34) of certain tRNAs, forming tRNA-cmnm(5)s(2)U34. The protein is tRNA modification GTPase MnmE of Rhodopseudomonas palustris (strain HaA2).